Here is a 77-residue protein sequence, read N- to C-terminus: MLAPGQLERINFLANKAKTEGLSQDEMNEQQNLRQEYLKAFRQSFKSQMMGMKVVDPDGNDVTPEKLKEDQKRYRGE.

A disordered region spans residues 53-77; that stretch reads KVVDPDGNDVTPEKLKEDQKRYRGE. Basic and acidic residues predominate over residues 63–77; the sequence is TPEKLKEDQKRYRGE.

This sequence belongs to the UPF0291 family.

The protein localises to the cytoplasm. In Exiguobacterium sp. (strain ATCC BAA-1283 / AT1b), this protein is UPF0291 protein EAT1b_0405.